The sequence spans 79 residues: Sec-independent protein translocase protein TatA (79 aa).

A helical transmembrane segment spans residues 1 to 21 (MGEFSLTHILLLAVIFLIFFG). The disordered stretch occupies residues 52-79 (DIHDNQQVSHQNKQSMGQTQKQGENQNS). The span at 56-79 (NQQVSHQNKQSMGQTQKQGENQNS) shows a compositional bias: polar residues.

The protein belongs to the TatA/E family. As to quaternary structure, the Tat system comprises two distinct complexes: a TatABC complex, containing multiple copies of TatA, TatB and TatC subunits, and a separate TatA complex, containing only TatA subunits. Substrates initially bind to the TatABC complex, which probably triggers association of the separate TatA complex to form the active translocon.

It localises to the cell inner membrane. Part of the twin-arginine translocation (Tat) system that transports large folded proteins containing a characteristic twin-arginine motif in their signal peptide across membranes. TatA could form the protein-conducting channel of the Tat system. This is Sec-independent protein translocase protein TatA from Bdellovibrio bacteriovorus (strain ATCC 15356 / DSM 50701 / NCIMB 9529 / HD100).